A 141-amino-acid polypeptide reads, in one-letter code: VLSATDKANVKTFWGKLGGHGGEYGGEALDRMFQAHPTTKTYFPHFDLNPGSAQVKGHGKKVADALTTAVNNLDDVPGALSALSDLHAHKLRVDPVNFKLLSHCLLVTLALHHPADFTPAVHASLDKFLATVATVLTSKYR.

The Globin domain maps to Val-1–Arg-141. A Phosphoserine modification is found at Ser-3. N6-succinyllysine is present on residues Lys-7 and Lys-11. Lys-16 carries the post-translational modification N6-acetyllysine; alternate. Lys-16 carries the post-translational modification N6-succinyllysine; alternate. Phosphotyrosine is present on Tyr-24. Lys-40 is subject to N6-succinyllysine. O2 is bound at residue His-58. His-87 contacts heme b. At Ser-102 the chain carries Phosphoserine. A Phosphothreonine modification is found at Thr-108. At Ser-124 the chain carries Phosphoserine. A phosphothreonine mark is found at Thr-134 and Thr-137. Position 138 is a phosphoserine (Ser-138).

It belongs to the globin family. As to quaternary structure, heterotetramer of two alpha chains and two beta chains. Red blood cells.

Involved in oxygen transport from the lung to the various peripheral tissues. Its function is as follows. Hemopressin acts as an antagonist peptide of the cannabinoid receptor CNR1. Hemopressin-binding efficiently blocks cannabinoid receptor CNR1 and subsequent signaling. This is Hemoglobin subunit alpha (HBA) from Erinaceus europaeus (Western European hedgehog).